The following is a 323-amino-acid chain: tRNA U34 carboxymethyltransferase (323 aa).

Residues Lys-91, Trp-105, Lys-110, Gly-130, Ile-180 to Glu-181, Met-196, Tyr-200, and Arg-315 contribute to the carboxy-S-adenosyl-L-methionine site.

The protein belongs to the class I-like SAM-binding methyltransferase superfamily. CmoB family. In terms of assembly, homotetramer.

The catalysed reaction is carboxy-S-adenosyl-L-methionine + 5-hydroxyuridine(34) in tRNA = 5-carboxymethoxyuridine(34) in tRNA + S-adenosyl-L-homocysteine + H(+). In terms of biological role, catalyzes carboxymethyl transfer from carboxy-S-adenosyl-L-methionine (Cx-SAM) to 5-hydroxyuridine (ho5U) to form 5-carboxymethoxyuridine (cmo5U) at position 34 in tRNAs. This chain is tRNA U34 carboxymethyltransferase, found in Citrifermentans bemidjiense (strain ATCC BAA-1014 / DSM 16622 / JCM 12645 / Bem) (Geobacter bemidjiensis).